Reading from the N-terminus, the 174-residue chain is Superoxide dismutase [Cu-Zn] (174 aa).

A signal peptide spans 1–23 (MIRLSAAAALGLAAALAASPALA). Residues His68, His70, and His86 each coordinate Cu cation. Residues Cys75 and Cys170 are joined by a disulfide bond. The Zn(2+) site is built by His86, His95, Asp104, and Asp107. Cu cation is bound at residue His150.

This sequence belongs to the Cu-Zn superoxide dismutase family. In terms of assembly, homodimer. The cofactor is Cu cation. Zn(2+) is required as a cofactor.

It localises to the periplasm. It catalyses the reaction 2 superoxide + 2 H(+) = H2O2 + O2. Its function is as follows. Destroys radicals which are normally produced within the cells and which are toxic to biological systems. May function against extracytoplasmic toxic oxygen species. This chain is Superoxide dismutase [Cu-Zn] (sodC), found in Caulobacter vibrioides (strain ATCC 19089 / CIP 103742 / CB 15) (Caulobacter crescentus).